We begin with the raw amino-acid sequence, 355 residues long: Peptide chain release factor 1 (355 aa).

Position 231 is an N5-methylglutamine (glutamine 231). Positions 280 to 291 (SERLAKESEARK) are enriched in basic and acidic residues. The disordered stretch occupies residues 280-303 (SERLAKESEARKSQVGSGDRSERI).

This sequence belongs to the prokaryotic/mitochondrial release factor family. Methylated by PrmC. Methylation increases the termination efficiency of RF1.

The protein resides in the cytoplasm. Its function is as follows. Peptide chain release factor 1 directs the termination of translation in response to the peptide chain termination codons UAG and UAA. The polypeptide is Peptide chain release factor 1 (Campylobacter jejuni subsp. jejuni serotype O:6 (strain 81116 / NCTC 11828)).